We begin with the raw amino-acid sequence, 262 residues long: Adenosylcobinamide-GDP ribazoletransferase (262 aa).

A run of 5 helical transmembrane segments spans residues 41–63 (AFPF…LMAL), 68–85 (LFAA…TGAL), 115–134 (IGTY…VSAF), 141–163 (FSPL…AMVW), and 201–221 (LLFY…VAFL).

This sequence belongs to the CobS family. As to quaternary structure, associated with a large complex of proteins. The cofactor is Mg(2+).

The protein localises to the cell inner membrane. It catalyses the reaction alpha-ribazole + adenosylcob(III)inamide-GDP = adenosylcob(III)alamin + GMP + H(+). The enzyme catalyses alpha-ribazole 5'-phosphate + adenosylcob(III)inamide-GDP = adenosylcob(III)alamin 5'-phosphate + GMP + H(+). Its pathway is cofactor biosynthesis; adenosylcobalamin biosynthesis; adenosylcobalamin from cob(II)yrinate a,c-diamide: step 7/7. In terms of biological role, joins adenosylcobinamide-GDP and alpha-ribazole to generate adenosylcobalamin (Ado-cobalamin). Also synthesizes adenosylcobalamin 5'-phosphate from adenosylcobinamide-GDP and alpha-ribazole 5'-phosphate. This is Adenosylcobinamide-GDP ribazoletransferase (cobV) from Sinorhizobium sp.